The following is a 73-amino-acid chain: TKCYVTPDVKSETCPAGQDICYTETWCDAWCTSRGKRVDLGCAATCPIVKPGVEIKCCSTDNCNPFPTWRKRP.

Cystine bridges form between C3–C21, C14–C42, C27–C31, C46–C57, and C58–C63.

This sequence belongs to the three-finger toxin family. Long-chain subfamily. Type II alpha-neurotoxin sub-subfamily. In terms of tissue distribution, expressed by the venom gland.

It localises to the secreted. Binds with high affinity to muscular (alpha-1/CHRNA1) and neuronal (alpha-7/CHRNA7) nicotinic acetylcholine receptor (nAChR) and inhibits acetylcholine from binding to the receptor, thereby impairing neuromuscular and neuronal transmission. This is Long neurotoxin 1 from Ophiophagus hannah (King cobra).